The primary structure comprises 217 residues: Large ribosomal subunit protein bL25 (217 aa).

The interval 178-217 (VVAPTEEPTEEEIEAMEGEQQTEEPEVVGESKEDEEKTEE) is disordered. The span at 184-205 (EPTEEEIEAMEGEQQTEEPEVV) shows a compositional bias: acidic residues. A compositionally biased stretch (basic and acidic residues) spans 206–217 (GESKEDEEKTEE).

The protein belongs to the bacterial ribosomal protein bL25 family. CTC subfamily. Part of the 50S ribosomal subunit; part of the 5S rRNA/L5/L18/L25 subcomplex. Contacts the 5S rRNA. Binds to the 5S rRNA independently of L5 and L18.

This is one of the proteins that binds to the 5S RNA in the ribosome where it forms part of the central protuberance. In Staphylococcus aureus (strain USA300), this protein is Large ribosomal subunit protein bL25.